The chain runs to 332 residues: Glycerol-3-phosphate dehydrogenase [NAD(P)+] (332 aa).

Serine 11, phenylalanine 12, lysine 32, and lysine 106 together coordinate NADPH. Sn-glycerol 3-phosphate contacts are provided by lysine 106, glycine 137, and serine 139. Alanine 141 contacts NADPH. Lysine 192, aspartate 245, serine 255, arginine 256, and asparagine 257 together coordinate sn-glycerol 3-phosphate. The active-site Proton acceptor is the lysine 192. NADPH is bound at residue arginine 256. 2 residues coordinate NADPH: valine 280 and glutamate 282.

The protein belongs to the NAD-dependent glycerol-3-phosphate dehydrogenase family.

The protein resides in the cytoplasm. The enzyme catalyses sn-glycerol 3-phosphate + NAD(+) = dihydroxyacetone phosphate + NADH + H(+). It catalyses the reaction sn-glycerol 3-phosphate + NADP(+) = dihydroxyacetone phosphate + NADPH + H(+). The protein operates within membrane lipid metabolism; glycerophospholipid metabolism. Functionally, catalyzes the reduction of the glycolytic intermediate dihydroxyacetone phosphate (DHAP) to sn-glycerol 3-phosphate (G3P), the key precursor for phospholipid synthesis. The polypeptide is Glycerol-3-phosphate dehydrogenase [NAD(P)+] (Staphylococcus aureus (strain bovine RF122 / ET3-1)).